A 579-amino-acid polypeptide reads, in one-letter code: Cytochrome P450 monooxygenase prx9 (579 aa).

A helical membrane pass occupies residues 6–25 (LPLGSFVGTTLLLFILYKLV). N-linked (GlcNAc...) asparagine glycans are attached at residues Asn194, Asn292, and Asn390. Cys512 lines the heme pocket.

This sequence belongs to the cytochrome P450 family. Heme is required as a cofactor.

Its subcellular location is the membrane. It functions in the pathway sesquiterpene biosynthesis. Cytochrome P450 monooxygenase; part of the gene cluster that mediates the biosynthesis of PR-toxin, a bicyclic sesquiterpene belonging to the eremophilane class and acting as a mycotoxin. The first step of the pathway is catalyzed by the aristolochene synthase which performs the cyclization of trans,trans-farnesyl diphosphate (FPP) to the bicyclic sesquiterpene aristolochene. Following the formation of aristolochene, the non-oxygenated aristolochene is converted to the trioxygenated intermediate eremofortin B, via 7-epi-neopetasone. This conversion appears to involve three enzymes, a hydroxysterol oxidase-like enzyme, the quinone-oxidase prx3 that forms the quinone-type-structure in the bicyclic nucleus of aristolochene with the C8-oxo group and the C-3 hydroxyl group, and the P450 monooxygenase prx9 that introduces the epoxide at the double bond between carbons 1 and 2. No monoxy or dioxy-intermediates have been reported to be released to the broth, so these three early oxidative reactions may be coupled together. Eremofortin B is further oxidized by another P450 monooxygenase, that introduces a second epoxide between carbons 7 and 11 prior to acetylation to eremofortin A by the acetyltransferase prx11. The second epoxidation may be performed by a second P450 monooxygenase. After the acetylation step, eremofortin A is converted to eremofortin C and then to PR-toxin. First the conversion of eremofortin A to eremofortin C proceeds by oxidation of the side chain of the molecule at C-12 and is catalyzed by the short-chain oxidoreductase prx1. The cytochrome P450 monooxygenase prx8 also plays a role in this step. The primary alcohol formed at C-12 is finally oxidized by the short-chain alcohol dehydrogenase prx4 that forms PR-toxin. This is Cytochrome P450 monooxygenase prx9 from Penicillium rubens (strain ATCC 28089 / DSM 1075 / NRRL 1951 / Wisconsin 54-1255) (Penicillium chrysogenum).